Here is an 84-residue protein sequence, read N- to C-terminus: Small ribosomal subunit protein bS20 (84 aa).

Belongs to the bacterial ribosomal protein bS20 family.

Binds directly to 16S ribosomal RNA. This chain is Small ribosomal subunit protein bS20, found in Ligilactobacillus salivarius (strain UCC118) (Lactobacillus salivarius).